Here is a 249-residue protein sequence, read N- to C-terminus: 5'-nucleotidase SurE (249 aa).

Residues Asp8, Asp9, Ser39, and Asn91 each coordinate a divalent metal cation.

It belongs to the SurE nucleotidase family. It depends on a divalent metal cation as a cofactor.

It is found in the cytoplasm. The enzyme catalyses a ribonucleoside 5'-phosphate + H2O = a ribonucleoside + phosphate. In terms of biological role, nucleotidase that shows phosphatase activity on nucleoside 5'-monophosphates. This Pseudomonas fluorescens (strain SBW25) protein is 5'-nucleotidase SurE.